We begin with the raw amino-acid sequence, 131 residues long: Peptide methionine sulfoxide reductase MsrB (131 aa).

The MsrB domain occupies 8-130 (LEEWKQMLDP…NSVCLDLVPR (123 aa)). The Zn(2+) site is built by cysteine 47, cysteine 50, cysteine 96, and cysteine 99. Residue cysteine 119 is the Nucleophile of the active site.

The protein belongs to the MsrB Met sulfoxide reductase family. Zn(2+) serves as cofactor.

The catalysed reaction is L-methionyl-[protein] + [thioredoxin]-disulfide + H2O = L-methionyl-(R)-S-oxide-[protein] + [thioredoxin]-dithiol. The polypeptide is Peptide methionine sulfoxide reductase MsrB (Pseudomonas syringae pv. syringae (strain B728a)).